Reading from the N-terminus, the 323-residue chain is UDP-N-acetylenolpyruvoylglucosamine reductase (323 aa).

The 166-residue stretch at 52-217 (KSGGAADWLF…VSARLQGEPG (166 aa)) folds into the FAD-binding PCMH-type domain. R197 is a catalytic residue. A disordered region spans residues 234–253 (EQSQPVRTKTGGSTFKNPPG). A compositionally biased stretch (polar residues) spans 235–249 (QSQPVRTKTGGSTFK). The Proton donor role is filled by S246. E316 is an active-site residue.

The protein belongs to the MurB family. It depends on FAD as a cofactor.

It localises to the cytoplasm. The enzyme catalyses UDP-N-acetyl-alpha-D-muramate + NADP(+) = UDP-N-acetyl-3-O-(1-carboxyvinyl)-alpha-D-glucosamine + NADPH + H(+). The protein operates within cell wall biogenesis; peptidoglycan biosynthesis. Its function is as follows. Cell wall formation. The polypeptide is UDP-N-acetylenolpyruvoylglucosamine reductase (Erythrobacter litoralis (strain HTCC2594)).